We begin with the raw amino-acid sequence, 107 residues long: Precursor of CEP14 (107 aa).

The N-terminal stretch at 1-21 is a signal peptide; the sequence is MAVRLIPTIWLFIVFAVIVSA. A propeptide spanning residues 22–92 is cleaved from the precursor; the sequence is LPSLVSSRKL…GKLRSRHLST (71 aa). An N-linked (GlcNAc...) asparagine glycan is attached at N39. Residues 43–76 form a disordered region; that stretch reads REEEKSHMPHVTKTSTLSALPKGKIPNSTPSKKG. A hydroxyproline mark is found at P101 and P103.

Belongs to the C-terminally encoded plant signaling peptide (CEP) family. As to quaternary structure, interacts with CEP receptors (e.g. CEPR1 and CEPR2). The mature small signaling peptide is generated by proteolytic processing of the longer precursor.

The protein resides in the secreted. The protein localises to the extracellular space. It is found in the apoplast. In terms of biological role, extracellular signaling peptide that may regulate primary root growth rate and systemic nitrogen (N)-demand signaling. The protein is Precursor of CEP14 of Arabidopsis thaliana (Mouse-ear cress).